We begin with the raw amino-acid sequence, 399 residues long: Elongation factor Tu (399 aa).

The tr-type G domain maps to 10-204 (KPHVNIGTIG…AVDASIPEPE (195 aa)). Residues 19-26 (GHVDHGKT) form a G1 region. Residue 19–26 (GHVDHGKT) participates in GTP binding. T26 contributes to the Mg(2+) binding site. Positions 60-64 (GITIN) are G2. The segment at 81–84 (DCPG) is G3. Residues 81–85 (DCPGH) and 136–139 (NKCD) contribute to the GTP site. The segment at 136-139 (NKCD) is G4. Residues 174–176 (SGL) are G5.

Belongs to the TRAFAC class translation factor GTPase superfamily. Classic translation factor GTPase family. EF-Tu/EF-1A subfamily. Monomer.

The protein localises to the cytoplasm. It carries out the reaction GTP + H2O = GDP + phosphate + H(+). Its function is as follows. GTP hydrolase that promotes the GTP-dependent binding of aminoacyl-tRNA to the A-site of ribosomes during protein biosynthesis. The chain is Elongation factor Tu from Prochlorococcus marinus (strain AS9601).